We begin with the raw amino-acid sequence, 327 residues long: Ketol-acid reductoisomerase (NADP(+)) (327 aa).

The 181-residue stretch at 2 to 182 (AKIYTDKDAS…GATRAGVIET (181 aa)) folds into the KARI N-terminal Rossmann domain. NADP(+)-binding positions include 25–28 (YGIQ), arginine 48, serine 53, and 83–86 (DMEQ). Histidine 108 is an active-site residue. Glycine 134 provides a ligand contact to NADP(+). One can recognise a KARI C-terminal knotted domain in the interval 183–327 (TFAEETETDL…GAEMRKLLFG (145 aa)). Mg(2+) is bound by residues aspartate 191, glutamate 195, glutamate 227, and glutamate 231. Residue serine 252 coordinates substrate.

It belongs to the ketol-acid reductoisomerase family. Mg(2+) serves as cofactor.

It carries out the reaction (2R)-2,3-dihydroxy-3-methylbutanoate + NADP(+) = (2S)-2-acetolactate + NADPH + H(+). The catalysed reaction is (2R,3R)-2,3-dihydroxy-3-methylpentanoate + NADP(+) = (S)-2-ethyl-2-hydroxy-3-oxobutanoate + NADPH + H(+). It functions in the pathway amino-acid biosynthesis; L-isoleucine biosynthesis; L-isoleucine from 2-oxobutanoate: step 2/4. It participates in amino-acid biosynthesis; L-valine biosynthesis; L-valine from pyruvate: step 2/4. In terms of biological role, involved in the biosynthesis of branched-chain amino acids (BCAA). Catalyzes an alkyl-migration followed by a ketol-acid reduction of (S)-2-acetolactate (S2AL) to yield (R)-2,3-dihydroxy-isovalerate. In the isomerase reaction, S2AL is rearranged via a Mg-dependent methyl migration to produce 3-hydroxy-3-methyl-2-ketobutyrate (HMKB). In the reductase reaction, this 2-ketoacid undergoes a metal-dependent reduction by NADPH to yield (R)-2,3-dihydroxy-isovalerate. This chain is Ketol-acid reductoisomerase (NADP(+)), found in Pyrobaculum neutrophilum (strain DSM 2338 / JCM 9278 / NBRC 100436 / V24Sta) (Thermoproteus neutrophilus).